The following is a 566-amino-acid chain: MWLRALVLATLAAFTAWGHPSSPPVVDTVHGKVLGKFVSLEGFTQPVAVFLGIPFAKPPLGPLRFTPPQPAEPWSFVKNATSYPPMCSQDAVAGQVLSELFTNRKENTPLKLSEDCLYLNIYTPADLTKKNRLPVMVWIHGGGLVVGAASTYDGLALAAHENVVVVTIQYRLGIWGFFSTGDEHSRGNWGHLDQLAALRWVQDNIASFGGNPGSVTIFGESAGGESVSVLVLSPLAKNLFHRAISESGVALTAVLVKKGDVKPLAEQIAIAAGCQTTTSAVMVHCLRQKTEEELLETTLKMKFFSLDLHGDPRESHPFLGTVIDGLLLPKTPEELQAERKFNTVPYMVGFNKQEFGWIIPMLMGYPLSEGKLDQKTAMSLLWKSYPLVYIAKELIPEATEKYLGGTDDPVKKKDRFLDLLADVMFSVPSVIVARHHRDAGVPTYMYEFQYRPSFSSDMKPKTVIGDHGDELFSVFGAPFLKEGASEEEIRLSKMVMKFWANFARNGNPNGEGLPRWPEYNQEEGYLQIGANTQAAQKLKDKEVAFWTTLFAKKAVEKPPQTEHIEL.

The first 18 residues, Met1 to Gly18, serve as a signal peptide directing secretion. An N-linked (GlcNAc...) asparagine glycan is attached at Asn79. Cys87 and Cys116 are disulfide-bonded. Catalysis depends on Ser221, which acts as the Acyl-ester intermediate. Residues Cys274 and Cys285 are joined by a disulfide bond. Residue Glu354 is the Charge relay system of the active site. Position 379 is a phosphoserine (Ser379). Residue His467 is the Charge relay system of the active site.

It belongs to the type-B carboxylesterase/lipase family. In terms of assembly, homotrimer and homohexamer. Binds to beta-glucuronidase.

Its subcellular location is the endoplasmic reticulum lumen. It localises to the cytoplasm. The protein resides in the lipid droplet. The catalysed reaction is a carboxylic ester + H2O = an alcohol + a carboxylate + H(+). It catalyses the reaction cholesteryl (9Z-octadecenoate) + H2O = cholesterol + (9Z)-octadecenoate + H(+). It carries out the reaction 2-(5Z,8Z,11Z,14Z-eicosatetraenoyl)-glycerol + H2O = glycerol + (5Z,8Z,11Z,14Z)-eicosatetraenoate + H(+). The enzyme catalyses prostaglandin E2 1-glyceryl ester + H2O = prostaglandin E2 + glycerol + H(+). The catalysed reaction is a cholesterol ester + H2O = cholesterol + a fatty acid + H(+). It catalyses the reaction prostaglandin F2alpha 1-glyceryl ester + H2O = prostaglandin F2alpha + glycerol + H(+). In terms of biological role, involved in the detoxification of xenobiotics and in the activation of ester and amide prodrugs. Hydrolyzes aromatic and aliphatic esters, but has no catalytic activity toward amides or a fatty acyl-CoA ester. Displays fatty acid ethyl ester synthase activity, catalyzing the ethyl esterification of oleic acid to ethyloleate. Converts monoacylglycerides to free fatty acids and glycerol. Hydrolyzes of 2-arachidonoylglycerol and prostaglandins. Hydrolyzes cellular cholesteryl esters to free cholesterols and promotes reverse cholesterol transport (RCT) by facilitating both the initial and final steps in the process. First of all, allows free cholesterol efflux from macrophages to extracellular cholesterol acceptors and secondly, releases free cholesterol from lipoprotein-delivered cholesteryl esters in the liver for bile acid synthesis or direct secretion into the bile. The polypeptide is Liver carboxylesterase 1 (Macaca fascicularis (Crab-eating macaque)).